The sequence spans 323 residues: tRNA dimethylallyltransferase (323 aa).

12–19 (GPTAAGKT) is a binding site for ATP. A substrate-binding site is contributed by 14-19 (TAAGKT). 2 interaction with substrate tRNA regions span residues 37–40 (DSAL) and 161–165 (QRLIR).

This sequence belongs to the IPP transferase family. In terms of assembly, monomer. The cofactor is Mg(2+).

It carries out the reaction adenosine(37) in tRNA + dimethylallyl diphosphate = N(6)-dimethylallyladenosine(37) in tRNA + diphosphate. In terms of biological role, catalyzes the transfer of a dimethylallyl group onto the adenine at position 37 in tRNAs that read codons beginning with uridine, leading to the formation of N6-(dimethylallyl)adenosine (i(6)A). The polypeptide is tRNA dimethylallyltransferase (Pseudomonas syringae pv. tomato (strain ATCC BAA-871 / DC3000)).